The sequence spans 169 residues: Ion-translocating oxidoreductase complex subunit B (169 aa).

The segment at 1-23 is hydrophobic; it reads MIISIIIFSILSFILGVIVSLVS. One can recognise a 4Fe-4S domain in the interval 30–89; that stretch reads SNLSLINDIDELLPQMQCAQCGYPGCYAYSQAIVDGNENIYKCIPGGKEVVLKLENLLNK. [4Fe-4S] cluster-binding residues include cysteine 47, cysteine 50, cysteine 55, cysteine 72, cysteine 116, cysteine 119, cysteine 122, cysteine 126, cysteine 146, cysteine 149, cysteine 152, and cysteine 156. 2 4Fe-4S ferredoxin-type domains span residues 107 to 136 and 137 to 166; these read SIVE…GTYN and FRHT…KKIM.

The protein belongs to the 4Fe4S bacterial-type ferredoxin family. RnfB subfamily. In terms of assembly, the complex is composed of six subunits: RnfA, RnfB, RnfC, RnfD, RnfE and RnfG. [4Fe-4S] cluster serves as cofactor.

It is found in the cell inner membrane. Functionally, part of a membrane-bound complex that couples electron transfer with translocation of ions across the membrane. The protein is Ion-translocating oxidoreductase complex subunit B of Buchnera aphidicola subsp. Baizongia pistaciae (strain Bp).